The sequence spans 614 residues: Nuclear receptor subfamily 1 group D member 1 (614 aa).

Residues 1–48 (MTTLDSNNNTGGVITYIGSSGSSPNRTSPESLYSDSSNGSFQSLTQGC) show a composition bias toward polar residues. The tract at residues 1–70 (MTTLDSNNNT…TQDPARSFGS (70 aa)) is required for phosphorylation by CSNK1E and cytoplasmic localization. The tract at residues 1 to 120 (MTTLDSNNNT…GNRVSPSKST (120 aa)) is disordered. Residues 1-129 (MTTLDSNNNT…TSNITKLNGM (129 aa)) are modulating. Residues 49–285 (PTYFPPSPTG…PPRSPSPEPT (237 aa)) are crucial for activation of GJA1. Phosphoserine; by GSK3-beta is present on residues Ser55 and Ser59. The segment covering 69–103 (GSIPPSLGDDGSPSSSSSSSSSSSSSFYNGSPPGG) has biased composition (low complexity). Positions 130–206 (VLLCKVCGDV…VGMSRDAVRF (77 aa)) form a DNA-binding region, nuclear receptor. 2 consecutive NR C4-type zinc fingers follow at residues 133–153 (CKVCGDVASGFHYGVHACEGC) and 170–194 (CLKNENCSIVRINRNRCQQCRFKKC). 2 positions are modified to N6-acetyllysine; by KAT5: Lys192 and Lys193. A disordered region spans residues 233 to 286 (SSQCPLETPPTQHPTPGPMGPSPPPAPAPSPLVGFSQFPQQLTPPRSPSPEPTV). Residues 239-262 (ETPPTQHPTPGPMGPSPPPAPAPS) are compositionally biased toward pro residues. Residue Thr275 is modified to Phosphothreonine; by CDK1. An NR LBD domain is found at 285 to 614 (TVEDVISQVA…KLLSFRVDAQ (330 aa)). Position 418 (Cys418) interacts with heme. Lys591 carries the post-translational modification N6-acetyllysine. Heme is bound at residue His602.

It belongs to the nuclear hormone receptor family. NR1 subfamily. As to quaternary structure, binds DNA as a monomer or a homodimer. Interacts with C1D, NR2E3, SP1 and ZNHIT1. Interacts with OPHN1 (via C-terminus). Interacts with PER2; the interaction associates PER2 to BMAL1 promoter region. Interacts with CRY1. Interacts with CCAR2. Interacts with SIAH2. Interacts with FBXW7 and CDK1. Interacts with HUWE1. Interacts with NR0B2. Interacts with NFIL3. Interacts (via domain NR LBD) with HSP90AA1 and HSP90AB1. Ubiquitinated, leading to its proteasomal degradation. Ubiquitinated by the SCF(FBXW7) complex when phosphorylated by CDK1 leading to its proteasomal degradation. Ubiquitinated by SIAH2; leading to its proteasomal degradation. Rapidly ubiquitinated in response to inflammatory triggers and sumoylation is a prerequisite to its ubiquitination. Post-translationally, sumoylated by UBE2I, desumoylated by SENP1, and sumoylation is a prerequisite to its ubiquitination. In terms of processing, phosphorylated by CSNK1E; phosphorylation enhances its cytoplasmic localization. Undergoes lysosome-mediated degradation in a time-dependent manner in the liver. Expressed in all tissues and cell lines examined. Expressed at high levels in some squamous carcinoma cell lines.

The protein localises to the nucleus. It is found in the cytoplasm. It localises to the cell projection. Its subcellular location is the dendrite. The protein resides in the dendritic spine. Functionally, transcriptional repressor which coordinates circadian rhythm and metabolic pathways in a heme-dependent manner. Integral component of the complex transcription machinery that governs circadian rhythmicity and forms a critical negative limb of the circadian clock by directly repressing the expression of core clock components BMAL1, CLOCK and CRY1. Also regulates genes involved in metabolic functions, including lipid and bile acid metabolism, adipogenesis, gluconeogenesis and the macrophage inflammatory response. Acts as a receptor for heme which stimulates its interaction with the NCOR1/HDAC3 corepressor complex, enhancing transcriptional repression. Recognizes two classes of DNA response elements within the promoter of its target genes and can bind to DNA as either monomers or homodimers, depending on the nature of the response element. Binds as a monomer to a response element composed of the consensus half-site motif 5'-[A/G]GGTCA-3' preceded by an A/T-rich 5' sequence (RevRE), or as a homodimer to a direct repeat of the core motif spaced by two nucleotides (RevDR-2). Acts as a potent competitive repressor of ROR alpha (RORA) function and regulates the levels of its ligand heme by repressing the expression of PPARGC1A, a potent inducer of heme synthesis. Regulates lipid metabolism by repressing the expression of APOC3 and by influencing the activity of sterol response element binding proteins (SREBPs); represses INSIG2 which interferes with the proteolytic activation of SREBPs which in turn govern the rhythmic expression of enzymes with key functions in sterol and fatty acid synthesis. Regulates gluconeogenesis via repression of G6PC1 and PEPCK and adipocyte differentiation via repression of PPARG. Regulates glucagon release in pancreatic alpha-cells via the AMPK-NAMPT-SIRT1 pathway and the proliferation, glucose-induced insulin secretion and expression of key lipogenic genes in pancreatic-beta cells. Positively regulates bile acid synthesis by increasing hepatic expression of CYP7A1 via repression of NR0B2 and NFIL3 which are negative regulators of CYP7A1. Modulates skeletal muscle oxidative capacity by regulating mitochondrial biogenesis and autophagy; controls mitochondrial biogenesis and respiration by interfering with the STK11-PRKAA1/2-SIRT1-PPARGC1A signaling pathway. Represses the expression of SERPINE1/PAI1, an important modulator of cardiovascular disease and the expression of inflammatory cytokines and chemokines in macrophages. Represses gene expression at a distance in macrophages by inhibiting the transcription of enhancer-derived RNAs (eRNAs). Plays a role in the circadian regulation of body temperature and negatively regulates thermogenic transcriptional programs in brown adipose tissue (BAT); imposes a circadian oscillation in BAT activity, increasing body temperature when awake and depressing thermogenesis during sleep. In concert with NR2E3, regulates transcriptional networks critical for photoreceptor development and function. In addition to its activity as a repressor, can also act as a transcriptional activator. In the ovarian granulosa cells acts as a transcriptional activator of STAR which plays a role in steroid biosynthesis. In collaboration with SP1, activates GJA1 transcription in a heme-independent manner. Represses the transcription of CYP2B10, CYP4A10 and CYP4A14. Represses the transcription of CES2. Represses and regulates the circadian expression of TSHB in a NCOR1-dependent manner. Negatively regulates the protein stability of NR3C1 and influences the time-dependent subcellular distribution of NR3C1, thereby affecting its transcriptional regulatory activity. Plays a critical role in the circadian control of neutrophilic inflammation in the lung; under resting, non-stress conditions, acts as a rhythmic repressor to limit inflammatory activity whereas in the presence of inflammatory triggers undergoes ubiquitin-mediated degradation thereby relieving inhibition of the inflammatory response. Plays a key role in the circadian regulation of microglial activation and neuroinflammation; suppresses microglial activation through the NF-kappaB pathway in the central nervous system. Plays a role in the regulation of the diurnal rhythms of lipid and protein metabolism in the skeletal muscle via transcriptional repression of genes controlling lipid and amino acid metabolism in the muscle. This is Nuclear receptor subfamily 1 group D member 1 (NR1D1) from Ovis aries (Sheep).